A 265-amino-acid polypeptide reads, in one-letter code: Metal-activated transcriptional activator protein AMT1 (265 aa).

The copper-fist DNA-binding region spans 1–40; the sequence is MVVINGVKYACDSCIKSHKAAQCEHNDRPLKILKPRGRPP. 4 residues coordinate Zn(2+): C11, C14, C23, and H25. Residues 103-129 are disordered; the sequence is RRKRTQKSNKKDNLSINSPTNNSPSPA. Over residues 119–128 the composition is skewed to low complexity; that stretch reads NSPTNNSPSP.

It localises to the nucleus. Trans-acting regulatory protein that activates transcription of the MT genes (metallothionein) in response to copper or silver ions. In Candida glabrata (strain ATCC 2001 / BCRC 20586 / JCM 3761 / NBRC 0622 / NRRL Y-65 / CBS 138) (Yeast), this protein is Metal-activated transcriptional activator protein AMT1 (AMT1).